The chain runs to 259 residues: UDP-2,3-diacylglucosamine hydrolase (259 aa).

Mn(2+) is bound by residues Asp8, His10, Asp41, Asn79, and His114. A substrate-binding site is contributed by Asn79 to Arg80. Asp122, Ser160, Asn164, Lys167, and His195 together coordinate substrate. His195 and His197 together coordinate Mn(2+).

It belongs to the LpxH family. It depends on Mn(2+) as a cofactor.

It is found in the cell inner membrane. The enzyme catalyses UDP-2-N,3-O-bis[(3R)-3-hydroxytetradecanoyl]-alpha-D-glucosamine + H2O = 2-N,3-O-bis[(3R)-3-hydroxytetradecanoyl]-alpha-D-glucosaminyl 1-phosphate + UMP + 2 H(+). It participates in glycolipid biosynthesis; lipid IV(A) biosynthesis; lipid IV(A) from (3R)-3-hydroxytetradecanoyl-[acyl-carrier-protein] and UDP-N-acetyl-alpha-D-glucosamine: step 4/6. Functionally, hydrolyzes the pyrophosphate bond of UDP-2,3-diacylglucosamine to yield 2,3-diacylglucosamine 1-phosphate (lipid X) and UMP by catalyzing the attack of water at the alpha-P atom. Involved in the biosynthesis of lipid A, a phosphorylated glycolipid that anchors the lipopolysaccharide to the outer membrane of the cell. This chain is UDP-2,3-diacylglucosamine hydrolase, found in Edwardsiella ictaluri (strain 93-146).